A 366-amino-acid polypeptide reads, in one-letter code: MKAIVVKPPKPGVEVRDLSQVIRHGSGTVKVRILENGICGSDREIVKGELTTARPPEGRDWLVLGHEALGIVEDSSDPRFKPGDLVMPINRRSYHGKCLNCLVGRPDFCEANEFVEAGMVGMDGFMVEYWYDDPKYLVKVPKDIADIAIVAQPLSDLEKSVEEILNVQRRFIWTCDDGTYNCRRSIVFGTGSTGILISLLLRTVGFEVYVANRRDPLESEAKITEEAGIIYYNYSKDGLDKLKSMGFDLVVDTTGASASLIGHEVEMLKPNGILGLFGFPSEGELTLRYDVIQRFIYKSNAIVGLINGQKPHFQQALAHLAQWKVVWPTVAKSLITRVVDVNNDKELLQVLNHKERGEIKVKIKWS.

A Zn(2+)-binding site is contributed by C39. S41 provides a ligand contact to substrate. Positions 66 and 67 each coordinate Zn(2+). Residues N90, E116, Q152, and D156 each coordinate substrate. Q152 serves as a coordination point for Zn(2+). Residues 212 to 214 (NRR), 277 to 279 (FGF), 305 to 307 (LIN), and K354 contribute to the NADP(+) site. Residue N307 coordinates substrate.

The protein belongs to the zinc-containing alcohol dehydrogenase family. Glucose 1-dehydrogenase subfamily. Zn(2+) serves as cofactor.

The catalysed reaction is D-glucose + NAD(+) = D-glucono-1,5-lactone + NADH + H(+). It catalyses the reaction D-glucose + NADP(+) = D-glucono-1,5-lactone + NADPH + H(+). Its function is as follows. Catalyzes the NAD(P)(+)-dependent oxidation of D-glucose to D-gluconate via gluconolactone. Can utilize both NAD(+) and NADP(+) as electron acceptor. Is involved in the degradation of glucose through a non-phosphorylative variant of the Entner-Doudoroff pathway. In Caldivirga maquilingensis (strain ATCC 700844 / DSM 13496 / JCM 10307 / IC-167), this protein is Glucose 1-dehydrogenase 2.